The following is a 351-amino-acid chain: N-acetyl-gamma-glutamyl-phosphate reductase (351 aa).

Residue Cys-154 is part of the active site.

Belongs to the NAGSA dehydrogenase family. Type 1 subfamily.

It is found in the cytoplasm. It carries out the reaction N-acetyl-L-glutamate 5-semialdehyde + phosphate + NADP(+) = N-acetyl-L-glutamyl 5-phosphate + NADPH + H(+). The protein operates within amino-acid biosynthesis; L-arginine biosynthesis; N(2)-acetyl-L-ornithine from L-glutamate: step 3/4. Functionally, catalyzes the NADPH-dependent reduction of N-acetyl-5-glutamyl phosphate to yield N-acetyl-L-glutamate 5-semialdehyde. The protein is N-acetyl-gamma-glutamyl-phosphate reductase of Prochlorococcus marinus (strain MIT 9215).